The primary structure comprises 276 residues: Pantothenate synthetase (276 aa).

An ATP-binding site is contributed by 27–34; sequence MGALHRGH. His34 functions as the Proton donor in the catalytic mechanism. A (R)-pantoate-binding site is contributed by Gln58. Gln58 is a binding site for beta-alanine. Residue 147–150 participates in ATP binding; sequence GKKD. Gln153 contributes to the (R)-pantoate binding site. Residues Ala176 and 184–187 each bind ATP; that span reads LSSR.

It belongs to the pantothenate synthetase family. In terms of assembly, homodimer.

The protein localises to the cytoplasm. It carries out the reaction (R)-pantoate + beta-alanine + ATP = (R)-pantothenate + AMP + diphosphate + H(+). It participates in cofactor biosynthesis; (R)-pantothenate biosynthesis; (R)-pantothenate from (R)-pantoate and beta-alanine: step 1/1. In terms of biological role, catalyzes the condensation of pantoate with beta-alanine in an ATP-dependent reaction via a pantoyl-adenylate intermediate. The polypeptide is Pantothenate synthetase (Helicobacter pylori (strain P12)).